A 937-amino-acid polypeptide reads, in one-letter code: Aconitate hydratase A (937 aa).

The segment at 410–450 (MANEGGFQPGSTSDLDNYNASWPGEGESAAANAEGRPSNPV) is disordered. Polar residues predominate over residues 418–429 (PGSTSDLDNYNA). Over residues 433-444 (GEGESAAANAEG) the composition is skewed to low complexity. [4Fe-4S] cluster-binding residues include cysteine 475, cysteine 541, and cysteine 544.

The protein belongs to the aconitase/IPM isomerase family. As to quaternary structure, monomer. It depends on [4Fe-4S] cluster as a cofactor.

The enzyme catalyses citrate = D-threo-isocitrate. It carries out the reaction (2S,3R)-3-hydroxybutane-1,2,3-tricarboxylate = 2-methyl-cis-aconitate + H2O. The protein operates within carbohydrate metabolism; tricarboxylic acid cycle; isocitrate from oxaloacetate: step 2/2. Its pathway is organic acid metabolism; propanoate degradation. In terms of biological role, involved in the catabolism of short chain fatty acids (SCFA) via the tricarboxylic acid (TCA)(acetyl degradation route) and probably via the 2-methylcitrate cycle I (propionate degradation route). Catalyzes the reversible isomerization of citrate to isocitrate via cis-aconitate. Could catalyze the hydration of 2-methyl-cis-aconitate to yield (2R,3S)-2-methylisocitrate. The apo form of AcnA functions as a RNA-binding regulatory protein. The polypeptide is Aconitate hydratase A (acn) (Corynebacterium efficiens (strain DSM 44549 / YS-314 / AJ 12310 / JCM 11189 / NBRC 100395)).